Reading from the N-terminus, the 179-residue chain is Large ribosomal subunit protein uL5 (179 aa).

Belongs to the universal ribosomal protein uL5 family. As to quaternary structure, part of the 50S ribosomal subunit; part of the 5S rRNA/L5/L18/L25 subcomplex. Contacts the 5S rRNA and the P site tRNA. Forms a bridge to the 30S subunit in the 70S ribosome.

Functionally, this is one of the proteins that bind and probably mediate the attachment of the 5S RNA into the large ribosomal subunit, where it forms part of the central protuberance. In the 70S ribosome it contacts protein S13 of the 30S subunit (bridge B1b), connecting the 2 subunits; this bridge is implicated in subunit movement. Contacts the P site tRNA; the 5S rRNA and some of its associated proteins might help stabilize positioning of ribosome-bound tRNAs. The protein is Large ribosomal subunit protein uL5 of Desulfatibacillum aliphaticivorans.